The primary structure comprises 296 residues: 4-diphosphocytidyl-2-C-methyl-D-erythritol kinase (296 aa).

K13 is a catalytic residue. 104–114 provides a ligand contact to ATP; sequence PMGGGIGGGSS. D146 is a catalytic residue.

It belongs to the GHMP kinase family. IspE subfamily.

The catalysed reaction is 4-CDP-2-C-methyl-D-erythritol + ATP = 4-CDP-2-C-methyl-D-erythritol 2-phosphate + ADP + H(+). The protein operates within isoprenoid biosynthesis; isopentenyl diphosphate biosynthesis via DXP pathway; isopentenyl diphosphate from 1-deoxy-D-xylulose 5-phosphate: step 3/6. Catalyzes the phosphorylation of the position 2 hydroxy group of 4-diphosphocytidyl-2C-methyl-D-erythritol. The chain is 4-diphosphocytidyl-2-C-methyl-D-erythritol kinase from Hahella chejuensis (strain KCTC 2396).